A 147-amino-acid polypeptide reads, in one-letter code: Peptide methionine sulfoxide reductase MsrA (147 aa).

The active site involves Cys-10.

Belongs to the MsrA Met sulfoxide reductase family.

It carries out the reaction L-methionyl-[protein] + [thioredoxin]-disulfide + H2O = L-methionyl-(S)-S-oxide-[protein] + [thioredoxin]-dithiol. It catalyses the reaction [thioredoxin]-disulfide + L-methionine + H2O = L-methionine (S)-S-oxide + [thioredoxin]-dithiol. Functionally, has an important function as a repair enzyme for proteins that have been inactivated by oxidation. Catalyzes the reversible oxidation-reduction of methionine sulfoxide in proteins to methionine. The sequence is that of Peptide methionine sulfoxide reductase MsrA from Pelagibacter ubique (strain HTCC1062).